Here is an 83-residue protein sequence, read N- to C-terminus: CDC42 small effector protein 2 (83 aa).

S-palmitoyl cysteine attachment occurs at residues C10 and C11. Positions 28-41 (IGEPTNFVHTAHVG) constitute a CRIB domain. A phosphoserine mark is found at S42 and S51.

It belongs to the CDC42SE/SPEC family. In terms of assembly, interacts with CDC42 (in GTP-bound form). Interacts weakly with RAC1 and not at all with RHOA.

It is found in the cytoplasm. The protein resides in the cytoskeleton. It localises to the cell membrane. The protein localises to the cell projection. Its subcellular location is the phagocytic cup. Probably involved in the organization of the actin cytoskeleton by acting downstream of CDC42, inducing actin filament assembly. Alters CDC42-induced cell shape changes. In activated T-cells, may play a role in CDC42-mediated F-actin accumulation at the immunological synapse. May play a role in early contractile events in phagocytosis in macrophages. The protein is CDC42 small effector protein 2 (Cdc42se2) of Rattus norvegicus (Rat).